We begin with the raw amino-acid sequence, 344 residues long: sn-glycerol-3-phosphate import ATP-binding protein UgpC 2 (344 aa).

The 231-residue stretch at 4–234 folds into the ABC transporter domain; the sequence is IELIDLKKNY…PETVFVAGFI (231 aa). 36-43 is a binding site for ATP; it reads GPSGCGKS.

The protein belongs to the ABC transporter superfamily. sn-glycerol-3-phosphate importer (TC 3.A.1.1.3) family. As to quaternary structure, the complex is composed of two ATP-binding proteins (UgpC), two transmembrane proteins (UgpA and UgpE) and a solute-binding protein (UgpB).

The protein resides in the cell inner membrane. The catalysed reaction is sn-glycerol 3-phosphate(out) + ATP + H2O = sn-glycerol 3-phosphate(in) + ADP + phosphate + H(+). Part of the ABC transporter complex UgpBAEC involved in sn-glycerol-3-phosphate (G3P) import. Responsible for energy coupling to the transport system. The polypeptide is sn-glycerol-3-phosphate import ATP-binding protein UgpC 2 (Rhizobium johnstonii (strain DSM 114642 / LMG 32736 / 3841) (Rhizobium leguminosarum bv. viciae)).